A 504-amino-acid chain; its full sequence is ATP synthase subunit alpha (504 aa).

172-179 (GDRQTGKT) lines the ATP pocket.

It belongs to the ATPase alpha/beta chains family. As to quaternary structure, F-type ATPases have 2 components, CF(1) - the catalytic core - and CF(0) - the membrane proton channel. CF(1) has five subunits: alpha(3), beta(3), gamma(1), delta(1), epsilon(1). CF(0) has three main subunits: a(1), b(2) and c(9-12). The alpha and beta chains form an alternating ring which encloses part of the gamma chain. CF(1) is attached to CF(0) by a central stalk formed by the gamma and epsilon chains, while a peripheral stalk is formed by the delta and b chains.

Its subcellular location is the cell inner membrane. It carries out the reaction ATP + H2O + 4 H(+)(in) = ADP + phosphate + 5 H(+)(out). Its function is as follows. Produces ATP from ADP in the presence of a proton gradient across the membrane. The alpha chain is a regulatory subunit. This is ATP synthase subunit alpha from Petrotoga mobilis (strain DSM 10674 / SJ95).